The primary structure comprises 394 residues: NADH dehydrogenase [ubiquinone] iron-sulfur protein 2 (394 aa).

Positions 1 to 16 (MTTKNRQIKNFTSNFG) are enriched in polar residues. The segment at 1–22 (MTTKNRQIKNFTSNFGPQHPAA) is disordered.

It belongs to the complex I 49 kDa subunit family. Complex I is composed of about 45 different subunits. This is a component of the iron-sulfur (IP) fragment of the enzyme.

The protein resides in the mitochondrion. The enzyme catalyses a ubiquinone + NADH + 5 H(+)(in) = a ubiquinol + NAD(+) + 4 H(+)(out). Its function is as follows. Core subunit of the mitochondrial membrane respiratory chain NADH dehydrogenase (Complex I) that is believed to belong to the minimal assembly required for catalysis. Complex I functions in the transfer of electrons from NADH to the respiratory chain. The immediate electron acceptor for the enzyme is believed to be ubiquinone. Component of the iron-sulfur (IP) fragment of the enzyme. The polypeptide is NADH dehydrogenase [ubiquinone] iron-sulfur protein 2 (NAD7) (Nicotiana sylvestris (Wood tobacco)).